Here is a 614-residue protein sequence, read N- to C-terminus: Dihydroxy-acid dehydratase (614 aa).

Residue aspartate 81 participates in Mg(2+) binding. A [2Fe-2S] cluster-binding site is contributed by cysteine 122. Mg(2+) contacts are provided by aspartate 123 and lysine 124. Lysine 124 is subject to N6-carboxylysine. Cysteine 193 provides a ligand contact to [2Fe-2S] cluster. Residue glutamate 489 coordinates Mg(2+). Serine 515 acts as the Proton acceptor in catalysis.

It belongs to the IlvD/Edd family. Homodimer. Requires [2Fe-2S] cluster as cofactor. Mg(2+) is required as a cofactor.

The enzyme catalyses (2R)-2,3-dihydroxy-3-methylbutanoate = 3-methyl-2-oxobutanoate + H2O. It carries out the reaction (2R,3R)-2,3-dihydroxy-3-methylpentanoate = (S)-3-methyl-2-oxopentanoate + H2O. The protein operates within amino-acid biosynthesis; L-isoleucine biosynthesis; L-isoleucine from 2-oxobutanoate: step 3/4. Its pathway is amino-acid biosynthesis; L-valine biosynthesis; L-valine from pyruvate: step 3/4. Its function is as follows. Functions in the biosynthesis of branched-chain amino acids. Catalyzes the dehydration of (2R,3R)-2,3-dihydroxy-3-methylpentanoate (2,3-dihydroxy-3-methylvalerate) into 2-oxo-3-methylpentanoate (2-oxo-3-methylvalerate) and of (2R)-2,3-dihydroxy-3-methylbutanoate (2,3-dihydroxyisovalerate) into 2-oxo-3-methylbutanoate (2-oxoisovalerate), the penultimate precursor to L-isoleucine and L-valine, respectively. In Hahella chejuensis (strain KCTC 2396), this protein is Dihydroxy-acid dehydratase.